Reading from the N-terminus, the 653-residue chain is Calpain-10 (653 aa).

Positions 13–321 (LFRDAAFPAA…FDEITIGYPI (309 aa)) constitute a Calpain catalytic domain. Active-site residues include cysteine 73, histidine 238, and asparagine 263. Domain III regions lie at residues 322-494 (TEAG…VSLS) and 513-653 (EWGT…PSWQ).

This sequence belongs to the peptidase C2 family.

In terms of biological role, calcium-regulated non-lysosomal thiol-protease which catalyzes limited proteolysis of substrates involved in cytoskeletal remodeling and signal transduction. May play a role in insulin-stimulated glucose uptake. The protein is Calpain-10 (CAPN10) of Macaca fascicularis (Crab-eating macaque).